The chain runs to 462 residues: Chromosomal replication initiator protein DnaA (462 aa).

A domain I, interacts with DnaA modulators region spans residues M1 to A84. The interval A84–S125 is domain II. Residues N126–A342 are domain III, AAA+ region. Residues G170, G172, K173, and T174 each contribute to the ATP site. The interval N343–S462 is domain IV, binds dsDNA.

Belongs to the DnaA family. As to quaternary structure, oligomerizes as a right-handed, spiral filament on DNA at oriC.

The protein resides in the cytoplasm. Plays an essential role in the initiation and regulation of chromosomal replication. ATP-DnaA binds to the origin of replication (oriC) to initiate formation of the DNA replication initiation complex once per cell cycle. Binds the DnaA box (a 9 base pair repeat at the origin) and separates the double-stranded (ds)DNA. Forms a right-handed helical filament on oriC DNA; dsDNA binds to the exterior of the filament while single-stranded (ss)DNA is stabiized in the filament's interior. The ATP-DnaA-oriC complex binds and stabilizes one strand of the AT-rich DNA unwinding element (DUE), permitting loading of DNA polymerase. After initiation quickly degrades to an ADP-DnaA complex that is not apt for DNA replication. Binds acidic phospholipids. The sequence is that of Chromosomal replication initiator protein DnaA from Shewanella woodyi (strain ATCC 51908 / MS32).